We begin with the raw amino-acid sequence, 141 residues long: Large ribosomal subunit protein uL11 (141 aa).

It belongs to the universal ribosomal protein uL11 family. Part of the ribosomal stalk of the 50S ribosomal subunit. Interacts with L10 and the large rRNA to form the base of the stalk. L10 forms an elongated spine to which L12 dimers bind in a sequential fashion forming a multimeric L10(L12)X complex. Post-translationally, one or more lysine residues are methylated.

Functionally, forms part of the ribosomal stalk which helps the ribosome interact with GTP-bound translation factors. This chain is Large ribosomal subunit protein uL11, found in Chlorobium phaeobacteroides (strain DSM 266 / SMG 266 / 2430).